Reading from the N-terminus, the 287-residue chain is Thioredoxin-related transmembrane protein 2 (287 aa).

The N-terminal stretch at 1–13 (MAVLAPLLAVLYA) is a signal peptide. Residues 14-112 (APGLLRWVSQ…ILFFRLDLRM (99 aa)) are Extracellular-facing. A helical membrane pass occupies residues 113–133 (GLLYITLCIVFLMTCKPPLYL). At 134-287 (GPEHIKYFSD…NEWNDGKKDQ (154 aa)) the chain is on the cytoplasmic side. A Thioredoxin domain is found at 137-209 (HIKYFSDKTL…PEVSCRYSIS (73 aa)). The short motif at 284–287 (KKDQ) is the Di-lysine motif element.

In terms of assembly, monomer. Homodimer; disulfide-linked. Occurs in both reduced and oxidized monomeric form. Oxidative conditions increase homodimerization.

It is found in the endoplasmic reticulum membrane. The protein resides in the mitochondrion membrane. In terms of biological role, endoplasmic reticulum and mitochondria-associated protein that probably functions as a regulator of cellular redox state and thereby regulates protein post-translational modification, protein folding and mitochondrial activity. The chain is Thioredoxin-related transmembrane protein 2 (tmx2) from Xenopus laevis (African clawed frog).